The sequence spans 96 residues: Co-chaperonin GroES (96 aa).

Belongs to the GroES chaperonin family. As to quaternary structure, heptamer of 7 subunits arranged in a ring. Interacts with the chaperonin GroEL.

It is found in the cytoplasm. Its function is as follows. Together with the chaperonin GroEL, plays an essential role in assisting protein folding. The GroEL-GroES system forms a nano-cage that allows encapsulation of the non-native substrate proteins and provides a physical environment optimized to promote and accelerate protein folding. GroES binds to the apical surface of the GroEL ring, thereby capping the opening of the GroEL channel. This chain is Co-chaperonin GroES, found in Ralstonia nicotianae (strain ATCC BAA-1114 / GMI1000) (Ralstonia solanacearum).